The sequence spans 186 residues: dTTP/UTP pyrophosphatase (186 aa).

Residue Asp67 is the Proton acceptor of the active site.

This sequence belongs to the Maf family. YhdE subfamily. It depends on a divalent metal cation as a cofactor.

The protein resides in the cytoplasm. The catalysed reaction is dTTP + H2O = dTMP + diphosphate + H(+). It carries out the reaction UTP + H2O = UMP + diphosphate + H(+). Nucleoside triphosphate pyrophosphatase that hydrolyzes dTTP and UTP. May have a dual role in cell division arrest and in preventing the incorporation of modified nucleotides into cellular nucleic acids. The sequence is that of dTTP/UTP pyrophosphatase from Carboxydothermus hydrogenoformans (strain ATCC BAA-161 / DSM 6008 / Z-2901).